Reading from the N-terminus, the 319-residue chain is Cytochrome c biogenesis protein CcsA (319 aa).

A run of 8 helical transmembrane segments spans residues 11–31, 34–54, 71–91, 97–117, 142–162, 227–247, 254–274, and 288–308; these read VNFA…SLAF, ISGL…ALAL, LYES…FIES, LIGA…SLAL, IMMI…LFLI, IIGL…VWAN, WSWD…AAYL, and AILA…VNFL.

Belongs to the CcmF/CycK/Ccl1/NrfE/CcsA family. May interact with Ccs1.

Its subcellular location is the plastid. It is found in the chloroplast thylakoid membrane. Functionally, required during biogenesis of c-type cytochromes (cytochrome c6 and cytochrome f) at the step of heme attachment. The chain is Cytochrome c biogenesis protein CcsA from Porphyra purpurea (Red seaweed).